The following is a 715-amino-acid chain: Protein naked cuticle homolog (715 aa).

The region spanning 18–53 (KKPQPLQFSFTLYDLDGHGKITKDDIAGIVSTIYES) is the EF-hand domain. Residues 256 to 282 (SRAKRKVVRKSRSSRKASKLTDDFSRP) form a disordered region. The span at 257–273 (RAKRKVVRKSRSSRKAS) shows a compositional bias: basic residues. The segment at 305–334 (ECWKSSLCRRELIEIIRDSMVKNSLCFQPN) is required for nuclear localization and inhibition of Wnt signaling. The interval 639-690 (ELHQSVQQQQGTHQQQQQPQSSVSSPTHHHHHHAGASLLGENSGSSASAAST) is disordered. 2 stretches are compositionally biased toward low complexity: residues 642-664 (QSVQ…VSSP) and 673-690 (GASL…AAST).

The protein belongs to the NKD family.

It is found in the cell membrane. Its subcellular location is the cytoplasm. It localises to the nucleus. In terms of biological role, cell autonomous antagonist of the canonical Wnt signaling pathway. May activate a second Wnt signaling pathway that controls planar cell polarity. Required for neuroblast specification. The sequence is that of Protein naked cuticle homolog from Aedes aegypti (Yellowfever mosquito).